The following is a 21-amino-acid chain: Fibrinogen beta chain (21 aa).

Gln1 bears the Pyrrolidone carboxylic acid mark. Tyr6 carries the sulfotyrosine modification.

Heterohexamer; disulfide linked. Contains 2 sets of 3 non-identical chains (alpha, beta and gamma). The 2 heterotrimers are in head to head conformation with the N-termini in a small central domain. Conversion of fibrinogen to fibrin is triggered by thrombin, which cleaves fibrinopeptides A and B from alpha and beta chains, and thus exposes the N-terminal polymerization sites responsible for the formation of the soft clot.

The protein localises to the secreted. Functionally, cleaved by the protease thrombin to yield monomers which, together with fibrinogen alpha (FGA) and fibrinogen gamma (FGG), polymerize to form an insoluble fibrin matrix. Fibrin has a major function in hemostasis as one of the primary components of blood clots. In addition, functions during the early stages of wound repair to stabilize the lesion and guide cell migration during re-epithelialization. Was originally thought to be essential for platelet aggregation, based on in vitro studies using anticoagulated blood. However subsequent studies have shown that it is not absolutely required for thrombus formation in vivo. Enhances expression of SELP in activated platelets. Maternal fibrinogen is essential for successful pregnancy. Fibrin deposition is also associated with infection, where it protects against IFNG-mediated hemorrhage. May also facilitate the antibacterial immune response via both innate and T-cell mediated pathways. This Rangifer tarandus (Reindeer) protein is Fibrinogen beta chain (FGB).